The primary structure comprises 935 residues: Progesterone receptor (935 aa).

A disordered region spans residues 1 to 50 (MTELKAKGPRAPHVAGSPSSPKVGSPLPCSQAAGPFPGSQTSDTLPEASA). The interval 1-164 (MTELKAKGPR…PATQRVLSPL (164 aa)) is AF3; mediates transcriptional activation. The tract at residues 1–568 (MTELKAKGPR…YSFESLPQKI (568 aa)) is modulating, Pro-Rich. Residue Ser20 is modified to Phosphoserine. The LXXL motif 1 signature appears at 55–59 (LDGLL). Residues 62–159 (RICQGQDPTD…DPPAAPATQR (98 aa)) are disordered. Residue Ser81 is modified to Phosphoserine. An LXXL motif 2 motif is present at residues 115 to 119 (LDTLW). Residues Ser130 and Ser162 each carry the phosphoserine modification. Residues 165-305 (MSRSGGKAGD…LATTVTDFIH (141 aa)) form a mediates transcriptional transrepression region. The Nuclear localization signal signature appears at 183-187 (KVLPR). A disordered region spans residues 185–252 (LPRGLSPSRQ…ALGGAAAGGG (68 aa)). A Phosphoserine modification is found at Ser190. Polar residues predominate over residues 191–203 (PSRQLLLPTSGSP). Ser213 is modified (phosphoserine). Residues 220 to 231 (EVEEEDGSESED) show a composition bias toward acidic residues. The segment covering 232–246 (SAGPLLKGKPRALGG) has biased composition (low complexity). Ser294 carries the phosphoserine; by MAPK1 modification. The interval 331–365 (GGAGAASAFAPPRSSPSASSTPVPGGDFPDCAYAP) is disordered. The span at 335-356 (AASAFAPPRSSPSASSTPVPGG) shows a compositional bias: low complexity. A Phosphoserine; by MAPK modification is found at Ser345. Lys388 participates in a covalent cross-link: Glycyl lysine isopeptide (Lys-Gly) (interchain with G-Cter in SUMO); alternate. Residue Lys388 forms a Glycyl lysine isopeptide (Lys-Gly) (interchain with G-Cter in ubiquitin); alternate linkage. Phosphoserine; by CDK2 is present on Ser400. Residues 415 to 452 (PDFPLGPPPSLPPRAPPPRPGEAAVTAAPASASVSSAS) form a disordered region. The span at 418 to 434 (PLGPPPSLPPRAPPPRP) shows a compositional bias: pro residues. Residues 435–452 (GEAAVTAAPASASVSSAS) show a composition bias toward low complexity. An AF1; mediates transcriptional activation region spans residues 456-548 (STLECILYKA…VYPPYLNYLR (93 aa)). Lys533 participates in a covalent cross-link: Glycyl lysine isopeptide (Lys-Gly) (interchain with G-Cter in SUMO). NR C4-type zinc fingers lie at residues 569–589 (CLIC…CGSC) and 605–629 (CAGR…LRKC). The nuclear receptor DNA-binding region spans 569-641 (CLICGDEASG…AGMVLGGRKF (73 aa)). Ser678 is subject to Phosphoserine. The region spanning 681–915 (QDIQLIPPLI…EFPEMMSEVI (235 aa)) is the NR LBD domain. The AF2; mediates transcriptional activation stretch occupies residues 689–935 (LINLLLSIEP…MVKPLLFHKK (247 aa)).

Belongs to the nuclear hormone receptor family. Interacts with SMARD1 and UNC45A. Interacts with CUEDC2; the interaction promotes ubiquitination, decreases sumoylation, and represses transcriptional activity. Interacts with PIAS3; the interaction promotes sumoylation of PR in a hormone-dependent manner, inhibits DNA-binding, and alters nuclear export. Interacts with SP1; the interaction requires ligand-induced phosphorylation on Ser-344 by ERK1/2-MAPK. Interacts with PRMT2. Interacts with NCOA2 and NCOA1. Interacts with KLF9. Interacts with GTF2B. In terms of processing, phosphorylated on multiple serine sites. Several of these sites are hormone-dependent. Phosphorylation on Ser-294 is highly hormone-dependent and modulates ubiquitination and sumoylation on Lys-388. Phosphorylation on Ser-345 requires induction by hormone. Basal phosphorylation on Ser-81, Ser-162, Ser-190 and Ser-400 is increased in response to progesterone and can be phosphorylated in vitro by the CDK2-A1 complex. Increased levels of phosphorylation on Ser-400 also in the presence of EGF, heregulin, IGF, PMA and FBS. Phosphorylation at this site by CDK2 is ligand-independent, and increases nuclear translocation and transcriptional activity. Phosphorylation at Ser-162 and Ser-294, but not at Ser-190, is impaired during the G(2)/M phase of the cell cycle. Phosphorylation on Ser-345 by ERK1/2 MAPK is required for interaction with SP1. Post-translationally, sumoylation is hormone-dependent and represses transcriptional activity. Sumoylation on all three sites is enhanced by PIAS3. Desumoylated by SENP1. Sumoylation on Lys-388, the main site of sumoylation, is repressed by ubiquitination on the same site, and modulated by phosphorylation at Ser-294. Ubiquitination is hormone-dependent and represses sumoylation on the same site. Promoted by MAPK-mediated phosphorylation on Ser-294. In terms of processing, palmitoylated by ZDHHC7 and ZDHHC21. Palmitoylation is required for plasma membrane targeting and for rapid intracellular signaling via ERK and AKT kinases and cAMP generation.

It localises to the nucleus. The protein resides in the cytoplasm. In terms of biological role, the steroid hormones and their receptors are involved in the regulation of eukaryotic gene expression and affect cellular proliferation and differentiation in target tissues. Transcriptional activator of several progesteron-dependent promoters in a variety of cell types. Involved in activation of SRC-dependent MAPK signaling on hormone stimulation. The protein is Progesterone receptor (PGR) of Pithecia irrorata (Gray monk saki).